The sequence spans 491 residues: Fatty acyl-CoA reductase 1 (491 aa).

The protein belongs to the fatty acyl-CoA reductase family. In terms of tissue distribution, expressed in the endodermal cell layer surrounding the central vasculature in roots. Expressed in the hilum region of seeds. Expressed in lateral root tips, cotyledons, the shoot apex, young leaves, petals, stamen filaments, and receptacle of siliques.

The catalysed reaction is a long-chain fatty acyl-CoA + 2 NADPH + 2 H(+) = a long-chain primary fatty alcohol + 2 NADP(+) + CoA. Its function is as follows. Catalyzes the reduction of fatty acyl-CoA to fatty alcohols. Catalyzes specifically the formation of C18:0 and C22:0 fatty alcohols. Provides the fatty alcohols required for synthesis of suberin in roots, seed coat and wound-induced leaf tissue. Provides the fatty alcohols required for synthesis of alkyl hydroxycinnamates in root waxes. The chain is Fatty acyl-CoA reductase 1 from Arabidopsis thaliana (Mouse-ear cress).